Here is a 250-residue protein sequence, read N- to C-terminus: Cell division protein ZapD (250 aa).

This sequence belongs to the ZapD family. Interacts with FtsZ.

The protein resides in the cytoplasm. Cell division factor that enhances FtsZ-ring assembly. Directly interacts with FtsZ and promotes bundling of FtsZ protofilaments, with a reduction in FtsZ GTPase activity. In Pectobacterium atrosepticum (strain SCRI 1043 / ATCC BAA-672) (Erwinia carotovora subsp. atroseptica), this protein is Cell division protein ZapD.